The following is a 148-amino-acid chain: Large ribosomal subunit protein bL9 (148 aa).

It belongs to the bacterial ribosomal protein bL9 family.

Functionally, binds to the 23S rRNA. The sequence is that of Large ribosomal subunit protein bL9 from Agathobacter rectalis (strain ATCC 33656 / DSM 3377 / JCM 17463 / KCTC 5835 / VPI 0990) (Eubacterium rectale).